We begin with the raw amino-acid sequence, 313 residues long: Ribosomal RNA small subunit methyltransferase H (313 aa).

S-adenosyl-L-methionine is bound by residues 35 to 37, D53, F80, D101, and Q108; that span reads GGY.

The protein belongs to the methyltransferase superfamily. RsmH family.

It is found in the cytoplasm. It catalyses the reaction cytidine(1402) in 16S rRNA + S-adenosyl-L-methionine = N(4)-methylcytidine(1402) in 16S rRNA + S-adenosyl-L-homocysteine + H(+). Specifically methylates the N4 position of cytidine in position 1402 (C1402) of 16S rRNA. The sequence is that of Ribosomal RNA small subunit methyltransferase H from Acidiphilium cryptum (strain JF-5).